The following is a 201-amino-acid chain: RILP-like protein 2 (201 aa).

The region spanning 14–108 (SPEMALDKDP…LRDGPQMGVG (95 aa)) is the RH1 domain. Residues 67–155 (LEMLEALVNQ…AQDELQCYKS (89 aa)) are a coiled coil. The 77-residue stretch at 121 to 197 (RPRFTLQELR…TVKSLFSFKQ (77 aa)) folds into the RH2 domain. The tract at residues 175–201 (TSSPRSNASKEKSTVKSLFSFKQGKNT) is disordered.

It belongs to the RILPL family.

The protein localises to the cytoplasm. It is found in the cytosol. It localises to the cytoskeleton. Its subcellular location is the microtubule organizing center. The protein resides in the centrosome. The protein localises to the cell projection. It is found in the cilium. Involved in cell shape and neuronal morphogenesis, positively regulating the establishment and maintenance of dendritic spines. Plays a role in cellular protein transport. The protein is RILP-like protein 2 (rilpl2) of Xenopus laevis (African clawed frog).